Reading from the N-terminus, the 699-residue chain is Protein phosphatase 1 regulatory subunit 37 (699 aa).

Pro residues predominate over residues 1 to 12 (MEIPPQEAPPGP). A disordered region spans residues 1–42 (MEIPPQEAPPGPGADGEAEEAPVEAPSPGPASPPADGRLKAA). Phosphoserine occurs at positions 50 and 56. LRR repeat units lie at residues 220-240 (SLAVLHLESSSLSGRPLMLLA), 248-269 (TLRELYLADNKLNGLQDSAQLG), 277-297 (SLQILDLRNNHVLDSGLAYIC), 306-326 (GLATLVLWNNQLTHTGMAFLG), and 334-354 (SLETLNLGHNPIGNEGVRNLK). The tract at residues 467 to 667 (RLQLSASMPE…PPGPEAKVGS (201 aa)) is disordered. A compositionally biased stretch (acidic residues) spans 510 to 525 (SDSDSDSEGEDRDEAD). A Phosphoserine modification is found at serine 566. Pro residues-rich tracts occupy residues 588 to 613 (PPVPPAPPGPVSPPASASPPTSPFPT) and 622 to 642 (DPGPPEPQPPLEPPQVGPPLP).

Belongs to the PPP1R37 family. As to quaternary structure, interacts with PPP1CA.

Functionally, inhibits phosphatase activity of protein phosphatase 1 (PP1) complexes. This is Protein phosphatase 1 regulatory subunit 37 (PPP1R37) from Bos taurus (Bovine).